A 168-amino-acid polypeptide reads, in one-letter code: Oocyte-secreted protein 2 (168 aa).

The first 21 residues, 1–21, serve as a signal peptide directing secretion; it reads MGVSMALEVLVYLAVLVWTCA.

It belongs to the PLAC1 family. As to expression, expressed in ovaries. Highly expressed in the germinal vesicles oocytes and metaphase II oocytes.

The protein localises to the secreted. It localises to the cytoplasm. The polypeptide is Oocyte-secreted protein 2 (Oosp2) (Mus musculus (Mouse)).